A 334-amino-acid polypeptide reads, in one-letter code: Guanine nucleotide-binding protein subunit beta-like protein (334 aa).

WD repeat units lie at residues G14 to F55, G65 to L104, G106 to M145, M152 to T192, D215 to D256, and A257 to S294.

Belongs to the WD repeat G protein beta family.

This chain is Guanine nucleotide-binding protein subunit beta-like protein, found in Encephalitozoon cuniculi (strain GB-M1) (Microsporidian parasite).